Reading from the N-terminus, the 200-residue chain is 3-isopropylmalate dehydratase small subunit (200 aa).

Belongs to the LeuD family. LeuD type 1 subfamily. Heterodimer of LeuC and LeuD.

It catalyses the reaction (2R,3S)-3-isopropylmalate = (2S)-2-isopropylmalate. It participates in amino-acid biosynthesis; L-leucine biosynthesis; L-leucine from 3-methyl-2-oxobutanoate: step 2/4. Functionally, catalyzes the isomerization between 2-isopropylmalate and 3-isopropylmalate, via the formation of 2-isopropylmaleate. This is 3-isopropylmalate dehydratase small subunit from Haemophilus influenzae (strain PittEE).